The chain runs to 197 residues: Nucleoid occlusion factor SlmA (197 aa).

One can recognise an HTH tetR-type domain in the interval 7-67 (INRREHILQC…GLIDFIEESL (61 aa)). The segment at residues 30 to 49 (TTAKLAAEVGVSEAALYRHF) is a DNA-binding region (H-T-H motif).

The protein belongs to the nucleoid occlusion factor SlmA family. As to quaternary structure, homodimer. Interacts with FtsZ.

It is found in the cytoplasm. The protein localises to the nucleoid. Functionally, required for nucleoid occlusion (NO) phenomenon, which prevents Z-ring formation and cell division over the nucleoid. Acts as a DNA-associated cell division inhibitor that binds simultaneously chromosomal DNA and FtsZ, and disrupts the assembly of FtsZ polymers. SlmA-DNA-binding sequences (SBS) are dispersed on non-Ter regions of the chromosome, preventing FtsZ polymerization at these regions. The polypeptide is Nucleoid occlusion factor SlmA (Shewanella woodyi (strain ATCC 51908 / MS32)).